Here is a 29-residue protein sequence, read N- to C-terminus: Glucagon (29 aa).

This sequence belongs to the glucagon family.

Its subcellular location is the secreted. In terms of biological role, glucagon plays a key role in glucose metabolism and homeostasis. Regulates blood glucose by increasing gluconeogenesis and decreasing glycolysis. This is Glucagon (gcg) from Polypterus senegalus (Senegal bichir).